The following is a 426-amino-acid chain: Enolase (426 aa).

(2R)-2-phosphoglycerate is bound at residue Gln163. The active-site Proton donor is the Glu205. Asp242, Glu286, and Asp313 together coordinate Mg(2+). Residues Lys338, Arg367, Ser368, and Lys389 each coordinate (2R)-2-phosphoglycerate. Residue Lys338 is the Proton acceptor of the active site.

The protein belongs to the enolase family. Mg(2+) serves as cofactor.

It localises to the cytoplasm. The protein localises to the secreted. The protein resides in the cell surface. It carries out the reaction (2R)-2-phosphoglycerate = phosphoenolpyruvate + H2O. Its pathway is carbohydrate degradation; glycolysis; pyruvate from D-glyceraldehyde 3-phosphate: step 4/5. Catalyzes the reversible conversion of 2-phosphoglycerate (2-PG) into phosphoenolpyruvate (PEP). It is essential for the degradation of carbohydrates via glycolysis. The sequence is that of Enolase from Helicobacter pylori (strain ATCC 700392 / 26695) (Campylobacter pylori).